The following is a 447-amino-acid chain: Probable alpha-galactosidase B (447 aa).

Residues 1–25 form the signal peptide; it reads MTTFFSLTTAAAVLTLARGSNALVR. 2 disulfides stabilise this stretch: Cys-45–Cys-77 and Cys-127–Cys-157. Catalysis depends on Asp-155, which acts as the Nucleophile. Residues Asn-162 and Asn-180 are each glycosylated (N-linked (GlcNAc...) asparagine). Position 225–229 (225–229) interacts with substrate; sequence EWGQA. Residue Asn-236 is glycosylated (N-linked (GlcNAc...) asparagine). Catalysis depends on Asp-247, which acts as the Proton donor. N-linked (GlcNAc...) asparagine glycosylation occurs at Asn-286.

The protein belongs to the glycosyl hydrolase 27 family.

It localises to the secreted. The catalysed reaction is Hydrolysis of terminal, non-reducing alpha-D-galactose residues in alpha-D-galactosides, including galactose oligosaccharides, galactomannans and galactolipids.. Hydrolyzes a variety of simple alpha-D-galactoside as well as more complex molecules such as oligosaccharides and polysaccharides. The protein is Probable alpha-galactosidase B (aglB) of Aspergillus fumigatus (strain ATCC MYA-4609 / CBS 101355 / FGSC A1100 / Af293) (Neosartorya fumigata).